A 138-amino-acid polypeptide reads, in one-letter code: Type II secretion system protein I (138 aa).

A propeptide spans 1-6 (MKHQRG) (leader sequence). Tyrosine 7 is subject to N-methyltyrosine. A helical membrane pass occupies residues 7–29 (YSLIEVIVAFALLALALTLLLGS).

Belongs to the GSP I family. Type II secretion is composed of four main components: the outer membrane complex, the inner membrane complex, the cytoplasmic secretion ATPase and the periplasm-spanning pseudopilus. Interacts with core component XpsG. Post-translationally, cleaved by prepilin peptidase. Methylated by prepilin peptidase at the amino group of the N-terminal tyrosine once the leader sequence is cleaved by prepilin peptidase.

The protein resides in the cell inner membrane. Its function is as follows. Component of the type II secretion system required for the energy-dependent secretion of extracellular factors such as proteases and toxins from the periplasm. Part of the pseudopilus tip complex that is critical for the recognition and binding of secretion substrates. The polypeptide is Type II secretion system protein I (xpsI) (Xanthomonas campestris pv. campestris (strain ATCC 33913 / DSM 3586 / NCPPB 528 / LMG 568 / P 25)).